Here is a 988-residue protein sequence, read N- to C-terminus: DNA-binding protein SMUBP-2 (988 aa).

Ala-2 carries the post-translational modification N-acetylalanine. Residues 213-220 (GPPGTGKT), Gln-402, Tyr-441, and Glu-570 each bind ATP. The SS DNA-binding stretch occupies residues 637 to 783 (TAFEYLDDIV…KARHITVSRR (147 aa)). Disordered stretches follow at residues 651 to 722 (THEG…GGTD), 765 to 820 (LKHD…PHGS), and 835 to 872 (RQQG…ALPS). Residues 702–718 (SQVQPQHSSKANGSDRT) are compositionally biased toward polar residues. The region spanning 721–784 (TDRTEHFRAM…ARHITVSRRS (64 aa)) is the R3H domain. Residues 765 to 775 (LKHDSTGEGKA) show a composition bias toward basic and acidic residues. A phosphoserine mark is found at Ser-797 and Ser-800. Residues 802 to 817 (AQAEPEPQVEQPVGQP) show a composition bias toward low complexity. Polar residues predominate over residues 835–844 (RQQGCQAQSQ). The short motif at 857 to 861 (KKKKK) is the Nuclear localization signal element. Residues 884 to 933 (VKADNTCSFTKCSASTTTLGQFCMHCSRRYCLSHHLPEIHGCGEKARAHA) form an AN1-type zinc finger. Zn(2+)-binding residues include Cys-890, Cys-895, Cys-906, Cys-909, Cys-914, His-917, His-923, and Cys-925. The interval 943 to 988 (LYAGSGTKDRALDPAKRAQLQRKLDKKLGELSSQRTSKKKEKERGT) is disordered. The segment covering 949 to 971 (TKDRALDPAKRAQLQRKLDKKLG) has biased composition (basic and acidic residues). The stretch at 957 to 986 (AKRAQLQRKLDKKLGELSSQRTSKKKEKER) forms a coiled coil.

The protein belongs to the DNA2/NAM7 helicase family. As to quaternary structure, homooligomer. Interacts with RUVBL1. Interacts with RUVBL2. Interacts with GTF3C1. Interacts with ABT1. Interacts with ribosomes. In terms of tissue distribution, expressed in liver, skin, muscle, heart, brain, spleen and kidney.

The protein resides in the nucleus. Its subcellular location is the cytoplasm. It is found in the cell projection. The protein localises to the axon. It carries out the reaction ATP + H2O = ADP + phosphate + H(+). Functionally, 5' to 3' helicase that unwinds RNA and DNA duplexes in an ATP-dependent reaction. Specific to 5'-phosphorylated single-stranded guanine-rich sequences. May play a role in RNA metabolism, ribosome biogenesis or initiation of translation. May play a role in regulation of transcription. Interacts with tRNA-Tyr. The polypeptide is DNA-binding protein SMUBP-2 (Ighmbp2) (Rattus norvegicus (Rat)).